The following is a 402-amino-acid chain: Prostaglandin E2 receptor EP1 subtype (402 aa).

Residues 1-35 lie on the Extracellular side of the membrane; it reads MSPCGPLNLSLAGEATTCAAPWVPNTSAVPPSGAS. 2 N-linked (GlcNAc...) asparagine glycosylation sites follow: asparagine 8 and asparagine 25. Residues 36-62 form a helical membrane-spanning segment; it reads PALPIFSMTLGAVSNLLALALLAQAAG. Topologically, residues 63–72 are cytoplasmic; sequence RLRRRRSAAT. Residues 73–96 traverse the membrane as a helical segment; that stretch reads FLLFVASLLATDLAGHVIPGALVL. Residues 97-111 lie on the Extracellular side of the membrane; the sequence is RLYTAGRAPAGGACH. Cysteine 110 and cysteine 188 are oxidised to a cystine. Residues 112–133 form a helical membrane-spanning segment; sequence FLGGCMVFFGLCPLLLGCGMAV. Residues 134-155 are Cytoplasmic-facing; it reads ERCVGVTRPLLHAARVSVARAR. A helical transmembrane segment spans residues 156–177; that stretch reads LALAAVAAVALAVALLPLARVG. Topologically, residues 178–201 are extracellular; the sequence is RYELQYPGTWCFIGLGPPGGWRQA. A helical transmembrane segment spans residues 202–227; that stretch reads LLAGLFASLGLVALLAALVCNTLSGL. Residues 228 to 294 lie on the Cytoplasmic side of the membrane; sequence ALLRARWRRR…ARRARAHDVE (67 aa). The tract at residues 238–266 is disordered; that stretch reads SRRPPPASGPDSRRRWGAHGPRSASASSA. A helical membrane pass occupies residues 295-321; that stretch reads MVGQLVGIMVVSCICWSPMLVLVALAV. Topologically, residues 322-332 are extracellular; that stretch reads GGWSSTSLQRP. The chain crosses the membrane as a helical span at residues 333 to 354; the sequence is LFLAVRLASWNQILDPWVYILL. Topologically, residues 355 to 402 are cytoplasmic; the sequence is RQAVLRQLLRLLPPRAGAKGGPAGLGLTPSAWEASSLRSSRHSGLSHF.

The protein belongs to the G-protein coupled receptor 1 family. Post-translationally, phosphorylated. Abundant in kidney. Lower level expression in lung, skeletal muscle and spleen, lowest expression in testis and not detected in liver brain and heart.

The protein resides in the cell membrane. Functionally, receptor for prostaglandin E2 (PGE2). The activity of this receptor is mediated by G(q) proteins which activate a phosphatidylinositol-calcium second messenger system. May play a role as an important modulator of renal function. Implicated the smooth muscle contractile response to PGE2 in various tissues. This is Prostaglandin E2 receptor EP1 subtype (PTGER1) from Homo sapiens (Human).